Reading from the N-terminus, the 402-residue chain is MSKLSLSSLDKSKLEGKKVLVRVDFNVPLNDDGQITDDTRIRAAIPTIKYLINNSAKVILAAHFGRPKGKVNERMRLTPIAARLSEILGKKVNLTESCIGEEALEKSNNLNNGDVLLLENVRFYEEEEKNDLNFAKNLAAHADMYVNDAFGAAHRAHASTQGVTKFLEPSVAGFLLEKELKYLQGAIDAPNRPLAAIVGGSKVSSKIGVLDSLLDKCDKIIIGGGMIFTFYKARGLDVGKSLVEEDKLELARNLEEKAKTKGVELLLPSDVVLANEFSPTAESKVSQIDSISGDWMGLDIGPQSIKVFQNALAECKTIIWNGPMGVFEFDKFAEGTNSIATTLADLSSFSEVCTIIGGGDSVAAVEKAGLAEKMSHISTGGGASLELLEGKNLPGVAALNEN.

Substrate is bound by residues D24–N26, R40, H63–R66, R122, and R155. ATP is bound by residues K206, G297, E328, and G358–S361.

It belongs to the phosphoglycerate kinase family. Monomer.

Its subcellular location is the cytoplasm. It catalyses the reaction (2R)-3-phosphoglycerate + ATP = (2R)-3-phospho-glyceroyl phosphate + ADP. It participates in carbohydrate degradation; glycolysis; pyruvate from D-glyceraldehyde 3-phosphate: step 2/5. This chain is Phosphoglycerate kinase, found in Prochlorococcus marinus (strain MIT 9515).